Consider the following 363-residue polypeptide: Cyanuric acid amidohydrolase (363 aa).

Residues 1 to 104 are RU A; it reads MYHIDVFRIP…TVFARRPAID (104 aa). Substrate-binding positions include Arg52 and 83–84; that span reads SG. Residues 112–249 form an RU B region; sequence RLTLGIAFTR…NVVIAIGMSE (138 aa). Residue Lys162 is part of the active site. Substrate-binding positions include Arg194 and 232 to 233; that span reads SA. The active-site Nucleophile is the Ser232. Residues 255–363 form an RU C region; it reads LVIAHGVMSD…GGPFAVIARA (109 aa). Mg(2+) is bound at residue Glu297. Substrate contacts are provided by residues Arg324 and 343–344; that span reads SG. Positions 346, 349, 350, 351, and 354 each coordinate Mg(2+).

The protein belongs to the cyclic amide hydrolase (CyAH) family. Homotetramer.

It carries out the reaction cyanurate + H2O = 1-carboxybiuret + H(+). The protein operates within xenobiotic degradation; atrazine degradation; biuret from cyanurate: step 1/1. Its activity is regulated as follows. Inhibited by barbituric acid. Functionally, responsible for the hydrolysis of cyanuric acid, an intermediate formed during catabolism of s-triazine based compounds in herbicides such as atrazine and polymers such as melamine. Catalyzes the hydrolytic opening of the s-triazine ring of cyanuric acid (2,4,6-trihydroxy-s-triazine) to yield carbon dioxide and carboxybiuret, which spontaneously decarboxylates to biuret. This Pseudomonas sp. (strain ADP) protein is Cyanuric acid amidohydrolase (atzD).